The chain runs to 193 residues: NADPH:quinone oxidoreductase MdaB (193 aa).

Residues 16 to 23 (SNGQLNDT), 69 to 72 (GWWM), Tyr108, and 124 to 127 (TWNA) each bind FAD.

This sequence belongs to the oxidoreductase MdaB family. As to quaternary structure, homodimer. It depends on FAD as a cofactor.

It localises to the cytoplasm. It carries out the reaction a quinone + NADPH + H(+) = a quinol + NADP(+). Its function is as follows. NADPH-specific quinone reductase. This chain is NADPH:quinone oxidoreductase MdaB, found in Escherichia coli O157:H7.